Consider the following 286-residue polypeptide: 33 kDa chaperonin (286 aa).

2 disulfide bridges follow: Cys-225–Cys-227 and Cys-258–Cys-261.

It belongs to the HSP33 family. Under oxidizing conditions two disulfide bonds are formed involving the reactive cysteines. Under reducing conditions zinc is bound to the reactive cysteines and the protein is inactive.

The protein resides in the cytoplasm. Functionally, redox regulated molecular chaperone. Protects both thermally unfolding and oxidatively damaged proteins from irreversible aggregation. Plays an important role in the bacterial defense system toward oxidative stress. The protein is 33 kDa chaperonin of Shewanella loihica (strain ATCC BAA-1088 / PV-4).